A 357-amino-acid chain; its full sequence is Protein-L-isoaspartate O-methyltransferase domain-containing protein 1 (357 aa).

Glycine 2 carries the N-myristoyl glycine lipid modification. Serine 64 is a catalytic residue. 3 adoMet binding motif regions span residues 85–94 (LNLGSGTGYL), 160–164 (YDRIY), and 181–191 (LKVGGILVMPI). Residues 240 to 250 (VRNLQDLARIY) are BC-box. The segment at 299 to 333 (PLDSEEDEKMEEDNKEEEEKDHNEAMKPEEPPQNL) is disordered. Acidic residues predominate over residues 301 to 317 (DSEEDEKMEEDNKEEEE). The segment covering 318 to 333 (KDHNEAMKPEEPPQNL) has biased composition (basic and acidic residues). Residues 341-344 (LPLP) form a CUL-box region.

Belongs to the methyltransferase superfamily. L-isoaspartyl/D-aspartyl protein methyltransferase family. Component of the probable ECS(PCMTD1) E3 ubiquitin-protein ligase complex, at least composed of CUL5, ELOB, ELOC, RBX2 and PCMTD1. Interacts (via the BC-box) with ELOB and ELOC; the interaction is direct and stabilizes PCMTD1.

Its subcellular location is the cytoplasm. It localises to the membrane. Functionally, substrate recognition component of an ECS (Elongin BC-CUL5-SOCS-box protein) E3 ubiquitin ligase complex which mediates the ubiquitination and subsequent proteasomal degradation of target proteins. Specifically binds to the methyltransferase cofactor S-adenosylmethionine (AdoMet) via the N-terminal AdoMet binding motif, but does not display methyltransferase activity. May provide an alternate maintenance pathway for modified proteins by acting as a damage-specific E3 ubiquitin ligase adaptor protein. The sequence is that of Protein-L-isoaspartate O-methyltransferase domain-containing protein 1 from Homo sapiens (Human).